We begin with the raw amino-acid sequence, 178 residues long: Inner membrane-spanning protein YciB (178 aa).

The next 6 membrane-spanning stretches (helical) occupy residues 1-21, 23-43, 51-71, 77-97, 120-140, and 150-170; these read MKILFDFLPIVIFFVVYKMTG, IIIATAILIPATIIQVGFTWF, MHLVSLALVVLLGGATVLLGD, WKPTIVNGLFAIAFLGSQFIG, LNLAWVGFFIVSGVTNLYVAF, and FKLFGLLGMTIVFIILQGIYL.

The protein belongs to the YciB family.

It is found in the cell inner membrane. Functionally, plays a role in cell envelope biogenesis, maintenance of cell envelope integrity and membrane homeostasis. This Marinomonas sp. (strain MWYL1) protein is Inner membrane-spanning protein YciB.